Here is a 78-residue protein sequence, read N- to C-terminus: Probable [Fe-S]-dependent transcriptional repressor (78 aa).

Iron-sulfur cluster-binding residues include Cys56, Cys61, Cys64, and Cys70.

Belongs to the FeoC family.

Functionally, may function as a transcriptional regulator that controls feoABC expression. The chain is Probable [Fe-S]-dependent transcriptional repressor from Citrobacter koseri (strain ATCC BAA-895 / CDC 4225-83 / SGSC4696).